The chain runs to 776 residues: Peregrinol diphosphate synthase CPS1, chloroplastic (776 aa).

The transit peptide at methionine 1–arginine 17 directs the protein to the chloroplast. Substrate is bound at residue lysine 238. 2 residues coordinate Mg(2+): aspartate 371 and aspartate 373. Positions aspartate 371–aspartate 374 match the DXDD motif motif. Position 457 (lysine 457) interacts with substrate.

The protein belongs to the terpene synthase family. Mg(2+) serves as cofactor. In terms of tissue distribution, present in both leaves and flowers, with higher levels in leaves.

The protein resides in the plastid. It localises to the chloroplast. The enzyme catalyses peregrinol diphosphate = (2E,6E,10E)-geranylgeranyl diphosphate + H2O. It participates in secondary metabolite biosynthesis; terpenoid biosynthesis. Its function is as follows. Involved in the biosynthesis of labdane-type diterpenoid including marrubiin and other labdane-related furanoid diterpenoids with potential applications as anti-diabetics, analgesics or vasorelaxants. Terpene synthase that produces peregrinol diphosphate from geranylgeranyl diphosphate (GGPP). This Marrubium vulgare (White horehound) protein is Peregrinol diphosphate synthase CPS1, chloroplastic.